The primary structure comprises 108 residues: ATP synthase subunit H, mitochondrial (108 aa).

Residues 1 to 19 constitute a mitochondrion transit peptide; the sequence is MFTLRAASRRAFSTSIARR. Disordered regions lie at residues 40-60 and 75-108; these read AKDA…KPPV and APVD…GVAV. Positions 47-60 are enriched in low complexity; it reads VKPWSAPSAPKPPV. Over residues 81-92 the composition is skewed to polar residues; the sequence is GQTNSKSASPQA. The span at 93–108 shows a compositional bias: acidic residues; it reads NDEDWLAFEEEEGVAV.

In terms of assembly, F-type ATP synthases have 2 components, the catalytic core F(1) and the membrane-embedded component F(0), linked together by a central stalk and a peripheral stalk. The central stalk, also called rotor shaft, is often seen as part of F(1). The peripheral stalk is seen as part of F(0). F(0) contains the membrane channel next to the rotor. F-type ATP synthases form dimers but each monomer functions independently in ATP generation. The dimer consists of 17 different polypeptides: ATP1 (subunit alpha, 3 molecules per monomer, part of F(1)), ATP2 (subunit beta, 3 copies per monomer, part of F(1)), ATP3 (subunit gamma, part of the central stalk), ATP4 (subunit b, part of the peripheral stalk), ATP5/OSCP (subunit 5/OSCP, part of the peripheral stalk), ATP6 (subunit a, part of the peripheral stalk), ATP7 (subunit d, part of the peripheral stalk), ATP8 (subunit 8, part of the peripheral stalk), OLI1 (subunit c, part of the rotor, 10 molecules per monomer), ATP14 (subunit H, part of the peripheral stalk), ATP15 (subunit epsilon, part of the central stalk), ATP16 (subunit delta, part of the central stalk), ATP17 (subunit f, part of the peripheral stalk), ATP18 (subunit i/j, part of the peripheral stalk), ATP19 (subunit k, dimer-specific, at interface between monomers), ATP20 (subunit g, at interface between monomers), TIM11 (subunit e, at interface between monomers).

The protein resides in the mitochondrion inner membrane. Mitochondrial membrane ATP synthase (F(1)F(0) ATP synthase or Complex V) produces ATP from ADP in the presence of a proton gradient across the membrane which is generated by electron transport complexes of the respiratory chain. F-type ATP synthases consist of two structural domains, F(1) - containing the extramembraneous catalytic core, and F(0) - containing the membrane proton channel, linked together by a central stalk and a peripheral stalk. During catalysis, ATP synthesis in the catalytic domain of F(1) is coupled via a rotary mechanism of the central stalk subunits to proton translocation. Part of the peripheral stalk. The sequence is that of ATP synthase subunit H, mitochondrial from Yarrowia lipolytica (strain CLIB 122 / E 150) (Yeast).